Here is a 337-residue protein sequence, read N- to C-terminus: Trace amine-associated receptor 5 (337 aa).

The Extracellular portion of the chain corresponds to 1 to 34 (MRAVFIQGAEEHPAAFCYQVNGSCPRTVHTLGIQ). Asparagine 21 carries N-linked (GlcNAc...) asparagine glycosylation. Intrachain disulfides connect cysteine 24–cysteine 188 and cysteine 99–cysteine 192. The chain crosses the membrane as a helical span at residues 35–55 (LVIYLACAAGMLIIVLGNVFV). At 56 to 70 (AFAVSYFKALHTPTN) the chain is on the cytoplasmic side. A helical membrane pass occupies residues 71–91 (FLLLSLALADMFLGLLVLPLS). The Extracellular segment spans residues 92–109 (TIRSVESCWFFGDFLCRL). A helical membrane pass occupies residues 110–130 (HTYLDTLFCLTSIFHLCFISI). At 131 to 154 (DRHCAICDPLLYPSKFTVRVALRY) the chain is on the cytoplasmic side. Residues 155–175 (ILAGWGVPAAYTSLFLYTDVV) form a helical membrane-spanning segment. The tract at residues 176 to 189 (ETRLSQWLEEMPCV) is extracellular Loop 2 (ECL2). The Extracellular portion of the chain corresponds to 176 to 204 (ETRLSQWLEEMPCVGSCQLLLNKFWGWLN). Residues 205-225 (FPLFFVPCLIMISLYVKIFVV) form a helical membrane-spanning segment. Topologically, residues 226 to 253 (ATRQAQQITTLSKSLAGAAKHERKAAKT) are cytoplasmic. A helical membrane pass occupies residues 254 to 274 (LGIAVGIYLLCWLPFTIDTMV). At 275–284 (DSLLHFITPP) the chain is on the extracellular side. The helical transmembrane segment at 285 to 307 (LVFDIFIWFAYFNSACNPIIYVF) threads the bilayer. At 308–337 (SYQWFRKALKLTLSQKVFSPQTRTVDLYQE) the chain is on the cytoplasmic side.

This sequence belongs to the G-protein coupled receptor 1 family. In terms of tissue distribution, expressed almost exclusively in skeletal muscle and selected areas of the brain, such amygdala, hippocampus, caudate nucleus, thalamus and hypothalamus. Weak expression is also find in substantia nigra.

It is found in the cell membrane. Its function is as follows. Olfactory receptor specific for trimethylamine, a trace amine. Also activated at lower level by dimethylethylamine. Trimethylamine is a bacterial metabolite found in some animal odors, and to humans it is a repulsive odor associated with bad breath and spoiled food. Trimethylamine-binding causes a conformation change that triggers signaling via G(s)-class of G alpha proteins (GNAL or GNAS). This Homo sapiens (Human) protein is Trace amine-associated receptor 5.